A 588-amino-acid chain; its full sequence is Nuclear hormone receptor family member nhr-23 (588 aa).

The interval 50-73 is disordered; sequence LHAKSSLQPSLSIETPKSKENDES. The span at 52–64 shows a compositional bias: polar residues; the sequence is AKSSLQPSLSIET. The nuclear receptor DNA-binding region spans 160-235; it reads VIPCKVCGDK…LGMSRDAVKF (76 aa). NR C4-type zinc fingers lie at residues 163–183 and 199–223; these read CKVCGDKSSGVHYGVITCEGC and CPRQKNCVVDRVNRNRCQYCRLKKC. One can recognise an NR LBD domain in the interval 345–586; that stretch reads PEEDVATRVI…ALYKELFTAD (242 aa).

Belongs to the nuclear hormone receptor family. NR1 subfamily. As to expression, expressed in the germline and oocytes and is a maternal gene product. In males and sperm-producing hermaphrodites, expressed in early pachytene spermatocytes, increasing in level throughout late pachytene. Expression is undetectable in meiotically dividing spermatocytes or mature spermatids.

The protein resides in the nucleus. In terms of biological role, orphan nuclear receptor. Transcription factor. Modulates expression of target genes, such as Period protein homolog lin-42 and microRNA let-7, by binding to hormone response elements (HRE). Involved in promoting oscillatory expression of the primary transcripts of let-7 and paralogous microRNAs miR-48, miR-84, and miR-241. Plays a role in normal development and required to regulate each larval molt. Involved in regulating both the frequency and number of molts, acting as part of a negative feedback loop with the let-7 family of microRNAs, perhaps contributing to a self-sustaining molecular-genetic oscillator. Positively modulates expression of collagen and hedgehog-related genes. Involved in development of the gonad and associated epidermal structures. Required in spermatogenesis, acting following the sperm/oocyte cell fate decision, downstream of the canonical sex-determination pathway. Involved in regulating formation of the sperm-specific fibrous body-membranous organelle (FB-MO) complexes, acting independently of transcription regulator spe-44. This chain is Nuclear hormone receptor family member nhr-23, found in Caenorhabditis elegans.